Here is a 332-residue protein sequence, read N- to C-terminus: Hygromycin-B 7''-O-kinase (332 aa).

Catalysis depends on Asp-223, which acts as the Proton acceptor.

The protein belongs to the aminoglycoside phosphotransferase family.

It carries out the reaction hygromycin B + ATP = 7''-O-phosphohygromycin B + ADP + H(+). Functionally, the aminoglycoside phosphotransferases achieve inactivation of their antibiotic substrates by phosphorylation. This chain is Hygromycin-B 7''-O-kinase (hyg), found in Streptomyces hygroscopicus.